We begin with the raw amino-acid sequence, 321 residues long: Arabinan endo-1,5-alpha-L-arabinosidase A (321 aa).

The first 19 residues, 1-19 (MYQLLSVASVPLLASLVHG), serve as a signal peptide directing secretion. The Proton acceptor role is filled by aspartate 34. Catalysis depends on glutamate 200, which acts as the Proton donor. The N-linked (GlcNAc...) asparagine glycan is linked to asparagine 295.

It belongs to the glycosyl hydrolase 43 family.

It catalyses the reaction Endohydrolysis of (1-&gt;5)-alpha-arabinofuranosidic linkages in (1-&gt;5)-arabinans.. It participates in glycan metabolism; L-arabinan degradation. Its preferred substrate is linear 1,5-alpha-L-arabinan. The enzyme activity is progressively reduced as 1,5-alpha-chains become shorter or more highly substituted. This Aspergillus niger protein is Arabinan endo-1,5-alpha-L-arabinosidase A (abnA).